The following is a 116-amino-acid chain: Large ribosomal subunit protein bL17 (116 aa).

This sequence belongs to the bacterial ribosomal protein bL17 family. As to quaternary structure, part of the 50S ribosomal subunit. Contacts protein L32.

In Chloroflexus aggregans (strain MD-66 / DSM 9485), this protein is Large ribosomal subunit protein bL17.